Consider the following 213-residue polypeptide: 3-dehydroquinate dehydratase (213 aa).

3-dehydroquinate-binding positions include 27-29 and Arg53; that span reads EVR. The Proton donor/acceptor role is filled by His111. Lys138 (schiff-base intermediate with substrate) is an active-site residue. 3-dehydroquinate is bound by residues Arg175 and Gln197.

The protein belongs to the type-I 3-dehydroquinase family. Homodimer.

It carries out the reaction 3-dehydroquinate = 3-dehydroshikimate + H2O. Its pathway is metabolic intermediate biosynthesis; chorismate biosynthesis; chorismate from D-erythrose 4-phosphate and phosphoenolpyruvate: step 3/7. Its function is as follows. Involved in the third step of the chorismate pathway, which leads to the biosynthesis of aromatic amino acids. Catalyzes the cis-dehydration of 3-dehydroquinate (DHQ) and introduces the first double bond of the aromatic ring to yield 3-dehydroshikimate. This Thermococcus gammatolerans (strain DSM 15229 / JCM 11827 / EJ3) protein is 3-dehydroquinate dehydratase.